A 331-amino-acid polypeptide reads, in one-letter code: Ketol-acid reductoisomerase (NADP(+)) (331 aa).

The KARI N-terminal Rossmann domain occupies alanine 2 to threonine 182. NADP(+) contacts are provided by residues tyrosine 25–glutamine 28, serine 51, serine 53, and aspartate 83–glutamine 86. Histidine 108 is an active-site residue. Position 134 (glycine 134) interacts with NADP(+). In terms of domain architecture, KARI C-terminal knotted spans threonine 183–leucine 328. Mg(2+) contacts are provided by aspartate 191, glutamate 195, glutamate 227, and glutamate 231. Serine 252 provides a ligand contact to substrate.

This sequence belongs to the ketol-acid reductoisomerase family. The cofactor is Mg(2+).

The catalysed reaction is (2R)-2,3-dihydroxy-3-methylbutanoate + NADP(+) = (2S)-2-acetolactate + NADPH + H(+). It carries out the reaction (2R,3R)-2,3-dihydroxy-3-methylpentanoate + NADP(+) = (S)-2-ethyl-2-hydroxy-3-oxobutanoate + NADPH + H(+). The protein operates within amino-acid biosynthesis; L-isoleucine biosynthesis; L-isoleucine from 2-oxobutanoate: step 2/4. It functions in the pathway amino-acid biosynthesis; L-valine biosynthesis; L-valine from pyruvate: step 2/4. In terms of biological role, involved in the biosynthesis of branched-chain amino acids (BCAA). Catalyzes an alkyl-migration followed by a ketol-acid reduction of (S)-2-acetolactate (S2AL) to yield (R)-2,3-dihydroxy-isovalerate. In the isomerase reaction, S2AL is rearranged via a Mg-dependent methyl migration to produce 3-hydroxy-3-methyl-2-ketobutyrate (HMKB). In the reductase reaction, this 2-ketoacid undergoes a metal-dependent reduction by NADPH to yield (R)-2,3-dihydroxy-isovalerate. In Rippkaea orientalis (strain PCC 8801 / RF-1) (Cyanothece sp. (strain PCC 8801)), this protein is Ketol-acid reductoisomerase (NADP(+)).